Here is a 334-residue protein sequence, read N- to C-terminus: MKQAVYVASPDSQQIHVWQLDSAGELTLLQTVDVPGQVQPMAISPNQRHLYVGVRPDFGIVSYHIADDGTLTAAGMAPLPGSPTHIDTDRQGRFLFSASYSFNCVSISPIDTHGVVQAPIQQLDDLPAPHSANIDPTNQILLVPCLKEDKVRLFDLSAEGQLTPHAQADITVAAGAGPRHMAFHPNHQVAYCVNELNSSVDVYQISNNGQEYHLVQSLDAMPADFTGTRWAADIHITPNGRYLYISDRTANLLGIFTVSKDGRVISLVGHHLTEAQPRGFNIDHSGNFLIASGQKSDHIEVYRIDQNTGELTTLKRYPVGKGPMWVSIRGAQNS.

It belongs to the cycloisomerase 2 family.

The enzyme catalyses 6-phospho-D-glucono-1,5-lactone + H2O = 6-phospho-D-gluconate + H(+). Its pathway is carbohydrate degradation; pentose phosphate pathway; D-ribulose 5-phosphate from D-glucose 6-phosphate (oxidative stage): step 2/3. Its function is as follows. Catalyzes the hydrolysis of 6-phosphogluconolactone to 6-phosphogluconate. The chain is 6-phosphogluconolactonase from Yersinia pseudotuberculosis serotype IB (strain PB1/+).